Here is a 323-residue protein sequence, read N- to C-terminus: MEKQVEIPEVELNSGHKMPIVGYGTCVPEPMPPLEELTAIFLDAIKVGYRHFDTASSYGTEEALGKAIAEAINSGLVKSREEFFISCKLWIEDADHDLILPALNQSLQILGVDYLDLYMIHMPVRVRKGAPMFNYSKEDFLPFDIQGTWKAMEECSKQGLAKSIGVSNYSVEKLTKLLETSTIPPAVNQVEMNVAWQQRKLLPFCKEKNIHITSWSPLLSYGVAWGSNAVMENPVLQQIAASKGKTVAQVALRWIYEQGASLITRTSNKDRMFENVQIFDWELSKEELDQIHEIPQRRGTLGEEFMHPEGPIKSPEELWDGDL.

Asp-53 contacts NADP(+). Tyr-58 serves as the catalytic Proton donor. His-121 contributes to the substrate binding site. Residues 167-168, Gln-189, 215-220, and 289-297 contribute to the NADP(+) site; these read SN, WSPLLS, and DQIHEIPQR. The tract at residues 302–323 is disordered; sequence GEEFMHPEGPIKSPEELWDGDL.

It belongs to the aldo/keto reductase family. In terms of assembly, monomer. In terms of tissue distribution, expressed in leaf epidermis.

The catalysed reaction is 15alpha-stemmadenine + NADP(+) = 17-dehydrostemmadenine + NADPH + 2 H(+). It functions in the pathway alkaloid biosynthesis. Its function is as follows. Component of iboga and aspidosperma monoterpenoid indole alkaloids (MIAs, e.g. tabersonine and catharanthine) biosynthesis pathway from 19E-geissoschizine. Catalyzes the second oxidation step of the unstable intermediate product resulting from the reaction triggered by the geissoschizine oxidase (GO) in the stemmadenine biosynthesis process from 19E-geissoschizine. The polypeptide is Protein REDOX 2 (Catharanthus roseus (Madagascar periwinkle)).